The sequence spans 322 residues: UDP-N-acetylenolpyruvoylglucosamine reductase (322 aa).

Residues 36 to 202 (RAGGPAQVLF…TSVLFEGVPG (167 aa)) form the FAD-binding PCMH-type domain. Arginine 182 is a catalytic residue. Serine 231 functions as the Proton donor in the catalytic mechanism. Glutamate 301 is a catalytic residue.

Belongs to the MurB family. The cofactor is FAD.

The protein resides in the cytoplasm. The enzyme catalyses UDP-N-acetyl-alpha-D-muramate + NADP(+) = UDP-N-acetyl-3-O-(1-carboxyvinyl)-alpha-D-glucosamine + NADPH + H(+). Its pathway is cell wall biogenesis; peptidoglycan biosynthesis. Its function is as follows. Cell wall formation. This Brucella melitensis biotype 2 (strain ATCC 23457) protein is UDP-N-acetylenolpyruvoylglucosamine reductase.